The sequence spans 364 residues: tRNA 2-selenouridine synthase (364 aa).

One can recognise a Rhodanese domain in the interval 14 to 137 (LLADTPLIDV…LRQTAIQATW (124 aa)). The active-site S-selanylcysteine intermediate is the C97.

This sequence belongs to the SelU family. Monomer.

It carries out the reaction 5-methylaminomethyl-2-thiouridine(34) in tRNA + selenophosphate + (2E)-geranyl diphosphate + H2O + H(+) = 5-methylaminomethyl-2-selenouridine(34) in tRNA + (2E)-thiogeraniol + phosphate + diphosphate. The enzyme catalyses 5-methylaminomethyl-2-thiouridine(34) in tRNA + (2E)-geranyl diphosphate = 5-methylaminomethyl-S-(2E)-geranyl-thiouridine(34) in tRNA + diphosphate. The catalysed reaction is 5-methylaminomethyl-S-(2E)-geranyl-thiouridine(34) in tRNA + selenophosphate + H(+) = 5-methylaminomethyl-2-(Se-phospho)selenouridine(34) in tRNA + (2E)-thiogeraniol. It catalyses the reaction 5-methylaminomethyl-2-(Se-phospho)selenouridine(34) in tRNA + H2O = 5-methylaminomethyl-2-selenouridine(34) in tRNA + phosphate. Involved in the post-transcriptional modification of the uridine at the wobble position (U34) of tRNA(Lys), tRNA(Glu) and tRNA(Gln). Catalyzes the conversion of 2-thiouridine (S2U-RNA) to 2-selenouridine (Se2U-RNA). Acts in a two-step process involving geranylation of 2-thiouridine (S2U) to S-geranyl-2-thiouridine (geS2U) and subsequent selenation of the latter derivative to 2-selenouridine (Se2U) in the tRNA chain. In Salmonella heidelberg (strain SL476), this protein is tRNA 2-selenouridine synthase.